The chain runs to 505 residues: RNA-splicing ligase RtcB homolog (505 aa).

5 residues coordinate Mn(2+): aspartate 119, cysteine 122, histidine 227, histidine 259, and histidine 353. 226 to 230 (NHYGE) contributes to the GMP binding site. Residues 353–354 (HN), 402–405 (GGTM), serine 409, 428–431 (HGAG), and lysine 504 contribute to the GMP site. Catalysis depends on histidine 428, which acts as the GMP-histidine intermediate.

This sequence belongs to the RtcB family. In terms of assembly, catalytic component of the tRNA-splicing ligase complex. The cofactor is Mn(2+).

It catalyses the reaction a 3'-end 3'-phospho-ribonucleotide-RNA + a 5'-end dephospho-ribonucleoside-RNA + GTP = a ribonucleotidyl-ribonucleotide-RNA + GMP + diphosphate. The catalysed reaction is a 3'-end 2',3'-cyclophospho-ribonucleotide-RNA + a 5'-end dephospho-ribonucleoside-RNA + GTP + H2O = a ribonucleotidyl-ribonucleotide-RNA + GMP + diphosphate + H(+). In terms of biological role, catalytic subunit of the tRNA-splicing ligase complex that acts by directly joining spliced tRNA halves to mature-sized tRNAs by incorporating the precursor-derived splice junction phosphate into the mature tRNA as a canonical 3',5'-phosphodiester. May act as an RNA ligase with broad substrate specificity, and may function toward other RNAs. The sequence is that of RNA-splicing ligase RtcB homolog from Brugia malayi (Filarial nematode worm).